We begin with the raw amino-acid sequence, 355 residues long: UDP-N-acetylglucosamine--N-acetylmuramyl-(pentapeptide) pyrophosphoryl-undecaprenol N-acetylglucosamine transferase (355 aa).

Residues 14–16 (TGG), asparagine 126, arginine 162, serine 190, isoleucine 243, 262–267 (ALTVSE), and glutamine 287 each bind UDP-N-acetyl-alpha-D-glucosamine.

The protein belongs to the glycosyltransferase 28 family. MurG subfamily.

The protein localises to the cell inner membrane. It catalyses the reaction di-trans,octa-cis-undecaprenyl diphospho-N-acetyl-alpha-D-muramoyl-L-alanyl-D-glutamyl-meso-2,6-diaminopimeloyl-D-alanyl-D-alanine + UDP-N-acetyl-alpha-D-glucosamine = di-trans,octa-cis-undecaprenyl diphospho-[N-acetyl-alpha-D-glucosaminyl-(1-&gt;4)]-N-acetyl-alpha-D-muramoyl-L-alanyl-D-glutamyl-meso-2,6-diaminopimeloyl-D-alanyl-D-alanine + UDP + H(+). It functions in the pathway cell wall biogenesis; peptidoglycan biosynthesis. Its function is as follows. Cell wall formation. Catalyzes the transfer of a GlcNAc subunit on undecaprenyl-pyrophosphoryl-MurNAc-pentapeptide (lipid intermediate I) to form undecaprenyl-pyrophosphoryl-MurNAc-(pentapeptide)GlcNAc (lipid intermediate II). The protein is UDP-N-acetylglucosamine--N-acetylmuramyl-(pentapeptide) pyrophosphoryl-undecaprenol N-acetylglucosamine transferase of Vibrio vulnificus (strain YJ016).